The following is a 115-amino-acid chain: Succinate dehydrogenase assembly factor 3, mitochondrial (115 aa).

It belongs to the complex I LYR family. SDHAF3 subfamily. Interacts with the iron-sulfur protein subunit within the SDH catalytic dimer.

The protein localises to the mitochondrion matrix. In terms of biological role, plays an essential role in the assembly of succinate dehydrogenase (SDH), an enzyme complex (also referred to as respiratory complex II) that is a component of both the tricarboxylic acid (TCA) cycle and the mitochondrial electron transport chain, and which couples the oxidation of succinate to fumarate with the reduction of ubiquinone (coenzyme Q) to ubiquinol. Promotes maturation of the iron-sulfur protein subunit of the SDH catalytic dimer, protecting it from the deleterious effects of oxidants. May act together with SDHAF1. This Nematostella vectensis (Starlet sea anemone) protein is Succinate dehydrogenase assembly factor 3, mitochondrial (acn9).